The following is a 120-amino-acid chain: NAD(P)H-quinone oxidoreductase subunit 3 (120 aa).

3 consecutive transmembrane segments (helical) span residues 10–30 (FLGF…TNLI), 64–84 (MFAL…PWAV), and 89–109 (LGLL…IALA).

It belongs to the complex I subunit 3 family. As to quaternary structure, NDH-1 can be composed of about 15 different subunits; different subcomplexes with different compositions have been identified which probably have different functions.

Its subcellular location is the cellular thylakoid membrane. It carries out the reaction a plastoquinone + NADH + (n+1) H(+)(in) = a plastoquinol + NAD(+) + n H(+)(out). It catalyses the reaction a plastoquinone + NADPH + (n+1) H(+)(in) = a plastoquinol + NADP(+) + n H(+)(out). In terms of biological role, NDH-1 shuttles electrons from an unknown electron donor, via FMN and iron-sulfur (Fe-S) centers, to quinones in the respiratory and/or the photosynthetic chain. The immediate electron acceptor for the enzyme in this species is believed to be plastoquinone. Couples the redox reaction to proton translocation, and thus conserves the redox energy in a proton gradient. Cyanobacterial NDH-1 also plays a role in inorganic carbon-concentration. This Prochlorococcus marinus (strain AS9601) protein is NAD(P)H-quinone oxidoreductase subunit 3.